Here is a 56-residue protein sequence, read N- to C-terminus: Endoregulin (56 aa).

Residues 25-45 traverse the membrane as a helical segment; the sequence is LTVIGLFTSTFLLFVLFAVVF.

In terms of assembly, homooligomer. Can also form heterooligomers with other sarcoplasmic/endoplasmic reticulum calcium ATPase (SERCA) regulators ARLN, PLN, SLN and STRIT1/DWORF. Monomer. Interacts as a monomer with ATP2A2/SERCA2; the interaction results in inhibition of ATP2A2 Ca(2+) affinity. As to expression, largely expressed in non-muscle tissues with the exception of weak expression in body wall muscles at 14.5 dpc. Expressed in epithelial cells of the trachea, bronchus, lung, intestine, pancreas, and liver.

It localises to the endoplasmic reticulum membrane. Inhibits the activity of the calcium ATPases ATP2A2/SERCA2 and ATP2A3/SERCA3 by decreasing their apparent affinity for Ca(2+). This Mus musculus (Mouse) protein is Endoregulin (Erln).